The sequence spans 99 residues: Aspartyl/glutamyl-tRNA(Asn/Gln) amidotransferase subunit C (99 aa).

This sequence belongs to the GatC family. Heterotrimer of A, B and C subunits.

It catalyses the reaction L-glutamyl-tRNA(Gln) + L-glutamine + ATP + H2O = L-glutaminyl-tRNA(Gln) + L-glutamate + ADP + phosphate + H(+). The enzyme catalyses L-aspartyl-tRNA(Asn) + L-glutamine + ATP + H2O = L-asparaginyl-tRNA(Asn) + L-glutamate + ADP + phosphate + 2 H(+). Its function is as follows. Allows the formation of correctly charged Asn-tRNA(Asn) or Gln-tRNA(Gln) through the transamidation of misacylated Asp-tRNA(Asn) or Glu-tRNA(Gln) in organisms which lack either or both of asparaginyl-tRNA or glutaminyl-tRNA synthetases. The reaction takes place in the presence of glutamine and ATP through an activated phospho-Asp-tRNA(Asn) or phospho-Glu-tRNA(Gln). This is Aspartyl/glutamyl-tRNA(Asn/Gln) amidotransferase subunit C from Delftia acidovorans (strain DSM 14801 / SPH-1).